The following is a 378-amino-acid chain: Beta-1,3-galactosyltransferase pvg3 (378 aa).

The Cytoplasmic segment spans residues 1–8; that stretch reads MFSNSKKK. Residues 9–29 form a helical; Signal-anchor for type II membrane protein membrane-spanning segment; that stretch reads IFLYVLIAGVATFSFAFLVLN. Over 30-378 the chain is Lumenal; it reads RLQAEEHSLA…ATIPLPSLDV (349 aa). Residues Asn53, Asn97, Asn180, and Asn354 are each glycosylated (N-linked (GlcNAc...) asparagine).

The protein belongs to the glycosyltransferase 31 family.

The protein resides in the endoplasmic reticulum membrane. Its subcellular location is the golgi apparatus. The protein localises to the golgi stack membrane. The catalysed reaction is 3-O-(beta-D-galactosyl-(1-&gt;4)-beta-D-xylosyl)-L-seryl-[protein] + UDP-alpha-D-galactose = 3-O-(beta-D-galactosyl-(1-&gt;3)-beta-D-galactosyl-(1-&gt;4)-beta-D-xylosyl)-L-seryl-[protein] + UDP + H(+). In terms of biological role, involved in cell wall biogenesis. Has a role in the addition of Gal-beta1,3 moeities to galactomannans and their subsequent pyruvylation. Has a role in meiosis. This is Beta-1,3-galactosyltransferase pvg3 (pvg3) from Schizosaccharomyces pombe (strain 972 / ATCC 24843) (Fission yeast).